We begin with the raw amino-acid sequence, 533 residues long: Putative phosphate permease jhp_1384 (533 aa).

A run of 12 helical transmembrane segments spans residues 23 to 43, 47 to 67, 81 to 101, 129 to 149, 156 to 176, 182 to 202, 221 to 241, 248 to 268, 286 to 306, 338 to 358, 372 to 392, and 509 to 529; these read IALA…FGQA, GLLL…IGAN, AISM…GAII, VMLA…LIGA, SVVG…AINW, IVAS…FFLM, VVPY…IVKV, VGFE…FILF, VNEL…FAHG, VPLW…SLYG, LDKM…LLAS, and LVTV…LGFI.

This sequence belongs to the inorganic phosphate transporter (PiT) (TC 2.A.20) family.

It is found in the cell membrane. Its function is as follows. Potential transporter for phosphate. This Helicobacter pylori (strain J99 / ATCC 700824) (Campylobacter pylori J99) protein is Putative phosphate permease jhp_1384.